We begin with the raw amino-acid sequence, 270 residues long: Transcription factor bHLH113 (270 aa).

Residues 109–153 (CTVDKSTKSSTKKRTGTGNGQESDQNRKPGKKGKRNQEKSSVGIA) are disordered. Residues 144 to 193 (NQEKSSVGIAKVRKERLGERIAALQQLVSPYGKTDAASVLHEAMGYIKFL) form the bHLH domain.

As to quaternary structure, homodimer.

The protein localises to the nucleus. This chain is Transcription factor bHLH113 (BHLH113), found in Arabidopsis thaliana (Mouse-ear cress).